Here is a 274-residue protein sequence, read N- to C-terminus: 5'-nucleotidase SurE (274 aa).

The a divalent metal cation site is built by aspartate 12, aspartate 13, serine 45, and asparagine 103.

Belongs to the SurE nucleotidase family. It depends on a divalent metal cation as a cofactor.

It localises to the cytoplasm. The catalysed reaction is a ribonucleoside 5'-phosphate + H2O = a ribonucleoside + phosphate. Nucleotidase that shows phosphatase activity on nucleoside 5'-monophosphates. This Chlamydia felis (strain Fe/C-56) (Chlamydophila felis) protein is 5'-nucleotidase SurE.